The following is a 423-amino-acid chain: MRSLGANMAAALRAAGVLLRDPLASSSWRVCQPWRWKSGAAAAAVTTETAQHAQGAKPQVQPQKRKPKTGILMLNMGGPETLGDVHDFLLRLFLDRDLMTLPIQNKLAPFIAKRRTPKIQEQYRRIGGGSPIKIWTSKQGEGMVKLLDELSPNTAPHKYYIGFRYVHPLTEEAIEEMERDGLERAIAFTQYPQYSCSTTGSSLNAIYRYYNQVGRKPTMKWSTIDRWPTHHLLIQCFADHILKELDHFPLEKRSEVVILFSAHSLPMSVVNRGDPYPQEVSATVQKVMERLEYCNPYRLVWQSKVGPMPWLGPQTDESIKGLCERGRKNILLVPIAFTSDHIETLYELDIEYSQVLAKECGVENIRRAESLNGNPLFSKALADLVHSHIQSNELCSKQLTLSCPLCVNPVCRETKSFFTSQQL.

A mitochondrion-targeting transit peptide spans M1 to Q54. K57 is modified (N6-acetyllysine). Protoporphyrin IX is bound by residues R115, Y123, and S130. K138 is subject to N6-succinyllysine. C196 lines the [2Fe-2S] cluster pocket. Catalysis depends on residues H230 and D383. Residues C403, C406, and C411 each coordinate [2Fe-2S] cluster. K415 carries the N6-acetyllysine; alternate modification. K415 carries the N6-succinyllysine; alternate modification.

It belongs to the ferrochelatase family. As to quaternary structure, homodimer. Homotetramer. Interacts with PGRMC1; the interaction results in decreased FECH activity. Interacts with ABCB10 and SLC25A37; this interaction forms an oligomeric complex. Forms a complex with ABCB7 and ABCB10, where a dimeric FECH bridges ABCB7 and ABCB10 homodimers; this complex may be required for cellular iron homeostasis, mitochondrial function and heme biosynthesis. Interacts with ABCB7 and ABCB10. It depends on [2Fe-2S] cluster as a cofactor.

The protein resides in the mitochondrion inner membrane. The enzyme catalyses heme b + 2 H(+) = protoporphyrin IX + Fe(2+). Its pathway is porphyrin-containing compound metabolism; protoheme biosynthesis; protoheme from protoporphyrin-IX: step 1/1. Inhibited by nitric oxide (NO). The 2Fe-2S cluster could act as a NO sensor. Functionally, catalyzes the ferrous insertion into protoporphyrin IX and participates in the terminal step in the heme biosynthetic pathway. This is Ferrochelatase, mitochondrial from Homo sapiens (Human).